A 280-amino-acid chain; its full sequence is 4-deoxy-L-threo-5-hexosulose-uronate ketol-isomerase (280 aa).

Residues histidine 198, histidine 200, glutamate 205, and histidine 247 each coordinate Zn(2+).

It belongs to the KduI family. Zn(2+) serves as cofactor.

It carries out the reaction 5-dehydro-4-deoxy-D-glucuronate = 3-deoxy-D-glycero-2,5-hexodiulosonate. It functions in the pathway glycan metabolism; pectin degradation; 2-dehydro-3-deoxy-D-gluconate from pectin: step 4/5. In terms of biological role, catalyzes the isomerization of 5-dehydro-4-deoxy-D-glucuronate to 3-deoxy-D-glycero-2,5-hexodiulosonate. In Bacteroides fragilis (strain YCH46), this protein is 4-deoxy-L-threo-5-hexosulose-uronate ketol-isomerase.